A 323-amino-acid chain; its full sequence is tRNA U34 carboxymethyltransferase (323 aa).

Carboxy-S-adenosyl-L-methionine is bound by residues K91, W105, K110, G130, 152-154 (DPT), 181-182 (IE), M196, Y200, and R315.

This sequence belongs to the class I-like SAM-binding methyltransferase superfamily. CmoB family. Homotetramer.

The catalysed reaction is carboxy-S-adenosyl-L-methionine + 5-hydroxyuridine(34) in tRNA = 5-carboxymethoxyuridine(34) in tRNA + S-adenosyl-L-homocysteine + H(+). Catalyzes carboxymethyl transfer from carboxy-S-adenosyl-L-methionine (Cx-SAM) to 5-hydroxyuridine (ho5U) to form 5-carboxymethoxyuridine (cmo5U) at position 34 in tRNAs. In Escherichia coli O8 (strain IAI1), this protein is tRNA U34 carboxymethyltransferase.